Here is a 591-residue protein sequence, read N- to C-terminus: Fidgetin-like protein 1 (591 aa).

2 disordered regions span residues Met-1 to Leu-117 and Gly-223 to Ile-249. The span at Lys-17–Gly-26 shows a compositional bias: basic and acidic residues. Residues Asp-76–Pro-93 are compositionally biased toward acidic residues. The span at Arg-237–Ile-249 shows a compositional bias: polar residues. ATP is bound by residues Ala-319 and Gly-359 to Met-364.

This sequence belongs to the AAA ATPase family. Hexamer. The cofactor is Mg(2+).

It is found in the nucleus. The enzyme catalyses ATP + H2O = ADP + phosphate + H(+). Functionally, has a role in spindle assembly which acts in the progression through mitosis during embryogenesis. Required for fertility. This is Fidgetin-like protein 1 (figl-1) from Caenorhabditis briggsae.